The chain runs to 120 residues: Testis-expressed protein 48 (120 aa).

The span at 29–45 (KVPSQTQEHKPSTQNLL) shows a compositional bias: polar residues. The segment at 29 to 86 (KVPSQTQEHKPSTQNLLLQKDELDRQNPKRINAVSHLPSRTPLIQTKKSTSSSSSEFE) is disordered. The span at 74–83 (TKKSTSSSSS) shows a compositional bias: low complexity.

In Homo sapiens (Human), this protein is Testis-expressed protein 48.